The sequence spans 206 residues: MAAAVLGQLGALWIHNLRSRGKLALGVLPQSYIHTSASLDISRKWEKKNKIVYPPQLPGEPRRPAEIYHCRRQIKYSKDKMWYLAKLIRGMSIDQALAQLEFNDKKGAKIIKEVLLEAQDMAVRDHNVEFRSNLYIAESTSGRGQCLKRIRYHGRGRFGIMEKVYCHYFVKLVEGPPPPPEPPKTAVAHAKEYIQQLRSRTIVHTL.

The N-terminal 40 residues, 1 to 40 (MAAAVLGQLGALWIHNLRSRGKLALGVLPQSYIHTSASLD), are a transit peptide targeting the mitochondrion.

It belongs to the universal ribosomal protein uL22 family. As to quaternary structure, component of the mitochondrial large ribosomal subunit (mt-LSU). Mature mammalian 55S mitochondrial ribosomes consist of a small (28S) and a large (39S) subunit. The 28S small subunit contains a 12S ribosomal RNA (12S mt-rRNA) and 30 different proteins. The 39S large subunit contains a 16S rRNA (16S mt-rRNA), a copy of mitochondrial valine transfer RNA (mt-tRNA(Val)), which plays an integral structural role, and 52 different proteins.

It is found in the mitochondrion. This is Large ribosomal subunit protein uL22m (MRPL22) from Homo sapiens (Human).